The primary structure comprises 464 residues: UDP-glycosyltransferase 76F2 (464 aa).

UDP-alpha-D-glucose contacts are provided by residues Ser-279, 338 to 340, 355 to 363, and 377 to 380; these read VNQ, HCGWNSTIE, and FSDQ.

The protein belongs to the UDP-glycosyltransferase family.

The sequence is that of UDP-glycosyltransferase 76F2 (UGT76F2) from Arabidopsis thaliana (Mouse-ear cress).